Reading from the N-terminus, the 132-residue chain is UPF0102 protein Ajs_0414 (132 aa).

The tract at residues 1-23 is disordered; it reads MGFLGKKVNGSAPARTTRAAGQA.

This sequence belongs to the UPF0102 family.

This chain is UPF0102 protein Ajs_0414, found in Acidovorax sp. (strain JS42).